The following is a 725-amino-acid chain: Glutamine-dependent NAD(+) synthetase (725 aa).

Residues 5-275 (VTVATCALNQ…VEVLTATLDL (271 aa)) enclose the CN hydrolase domain. E45 acts as the Proton acceptor; for glutaminase activity in catalysis. Residue K114 is the For glutaminase activity of the active site. Residue C175 is the Nucleophile; for glutaminase activity of the active site. A ligase region spans residues 325–706 (YHRPEEEISL…KTSQTLEEQI (382 aa)). 355–362 (PLSGGVDS) provides a ligand contact to ATP. S357 is an active-site residue.

It in the C-terminal section; belongs to the NAD synthetase family. Homohexamer.

It catalyses the reaction deamido-NAD(+) + L-glutamine + ATP + H2O = L-glutamate + AMP + diphosphate + NAD(+) + H(+). It participates in cofactor biosynthesis; NAD(+) biosynthesis; NAD(+) from deamido-NAD(+) (L-Gln route): step 1/1. Catalyzes the final step of the nicotinamide adenine dinucleotide (NAD) de novo synthesis pathway, the ATP-dependent amidation of deamido-NAD using L-glutamine as a nitrogen source. In Rattus norvegicus (Rat), this protein is Glutamine-dependent NAD(+) synthetase (Nadsyn1).